The chain runs to 162 residues: UPF0114 protein Sden_0436 (162 aa).

3 helical membrane-spanning segments follow: residues 15-35 (IMAP…IKFF), 53-73 (LVLI…LIMV), and 136-156 (IMWY…MGYL).

Belongs to the UPF0114 family.

The protein localises to the cell membrane. The chain is UPF0114 protein Sden_0436 from Shewanella denitrificans (strain OS217 / ATCC BAA-1090 / DSM 15013).